The following is a 1268-amino-acid chain: Vigilin (1268 aa).

Position 2 is an N-acetylserine (serine 2). Threonine 8 is subject to Phosphothreonine. A phosphoserine mark is found at serine 11, serine 31, and serine 35. KH domains lie at 158–229, 230–302, 303–371, 372–442, 443–514, 515–588, 589–660, 661–734, 735–807, 808–880, 881–979, 980–1059, 1060–1134, and 1135–1209; these read PKEH…RLEV, EKAF…AVEV, KKSQ…SVAA, PSWL…EINI, DHKF…DLII, EQRF…SVPI, FKQF…EVSI, PAKL…DIRA, KPEY…SMLV, DPKH…ECAI, PQKF…EVEV, PFDL…SVTV, DPKY…DVPL, and DHRV…ALQV. 2 positions are modified to phosphothreonine: threonine 295 and threonine 296. At serine 317 the chain carries Phosphoserine. At tyrosine 437 the chain carries Phosphotyrosine. The residue at position 645 (serine 645) is a Phosphoserine. The interval 910-947 is disordered; sequence PDREENPVHSTEPAVQENGDEAGEGREAKDSDPGSPRR. The span at 932 to 947 shows a compositional bias: basic and acidic residues; sequence GEGREAKDSDPGSPRR. Position 991 is an N6-acetyllysine (lysine 991). Positions 1237-1249 are enriched in polar residues; sequence SSEKAPDMSSSEE. The tract at residues 1237–1268 is disordered; the sequence is SSEKAPDMSSSEEFPSFGAQVAPKTLPWGPKR. Phosphoserine is present on residues serine 1247 and serine 1252.

The protein resides in the cytoplasm. The protein localises to the nucleus. Its function is as follows. Appears to play a role in cell sterol metabolism. It may function to protect cells from over-accumulation of cholesterol. The chain is Vigilin (HDLBP) from Pongo abelii (Sumatran orangutan).